A 345-amino-acid polypeptide reads, in one-letter code: GDP-mannose transporter (345 aa).

Topologically, residues 1-8 (MDNHMLNR) are cytoplasmic. Residues 9–29 (ISKSPILPVVSYCMASILMTL) traverse the membrane as a helical segment. Topologically, residues 30-40 (TNKYVLSSPGY) are lumenal. The helical transmembrane segment at 41 to 61 (NMNFLLLTVQSTVCVAAIGIL) threads the bilayer. Topologically, residues 62 to 78 (KRLKVINYRDFDFREAK) are cytoplasmic. Residues 79-101 (FWFPISFLLVAMIYTASKALQFL) form a helical membrane-spanning segment. Residues 102–104 (SVP) are Lumenal-facing. The chain crosses the membrane as a helical span at residues 105–127 (VYTIFKNLTIIIIAYGEVLWFGG). Residues 128–131 (HVTA) lie on the Cytoplasmic side of the membrane. Residues 132 to 150 (LTLFSFGLMVLSSIVAAWA) traverse the membrane as a helical segment. Residues 151-161 (DIQSSSFASQT) are Lumenal-facing. The helical transmembrane segment at 162–182 (LNSGYLWMVLNCLTNAAFVLA) threads the bilayer. Residues 183–194 (MRKRIKLTNFRD) lie on the Cytoplasmic side of the membrane. The helical transmembrane segment at 195–215 (FDTMFYNNLLSIPVLVICTLF) threads the bilayer. Residues 216–233 (TEDWSAENIAQNFPPDAK) lie on the Lumenal side of the membrane. Residues 234–254 (FGVLMAMAISGVSSVGISYTS) form a helical membrane-spanning segment. At 255 to 264 (AWCVRVTSST) the chain is on the cytoplasmic side. A helical membrane pass occupies residues 265-285 (TYSMVGALNKLPLAIAGLVFF). Topologically, residues 286-288 (DAP) are lumenal. Residues 289 to 309 (ITFGSVTAILLGFISGVVYAV) form a helical membrane-spanning segment. The Cytoplasmic segment spans residues 310–345 (AKSQQQRQKDPATILPMTHNPVSASSQSMRDSLSKS). Residues 319-345 (DPATILPMTHNPVSASSQSMRDSLSKS) form a disordered region. The segment covering 329–345 (NPVSASSQSMRDSLSKS) has biased composition (polar residues).

The protein belongs to the TPT transporter family. SLC35D subfamily. Homooligomer.

It localises to the golgi apparatus membrane. The protein resides in the cytoplasmic vesicle membrane. Its subcellular location is the endoplasmic reticulum membrane. Functionally, involved in the import of GDP-mannose from the cytoplasm into the Golgi lumen. The polypeptide is GDP-mannose transporter (vrg4) (Schizosaccharomyces pombe (strain 972 / ATCC 24843) (Fission yeast)).